Reading from the N-terminus, the 218-residue chain is Ras-related protein Rab11E (218 aa).

20-27 (GDSGVGKS) lines the GTP pocket. Residues 42–50 (SKSTIGVEF) carry the Effector region motif. GTP is bound by residues 68 to 72 (DTAGQ) and 126 to 129 (NKSD). S-geranylgeranyl cysteine attachment occurs at residues cysteine 215 and cysteine 216.

This sequence belongs to the small GTPase superfamily. Rab family.

It is found in the cell membrane. In Lotus japonicus (Lotus corniculatus var. japonicus), this protein is Ras-related protein Rab11E (RAB11E).